Here is a 358-residue protein sequence, read N- to C-terminus: Carbohydrate sulfotransferase 10 (358 aa).

At 1–6 (MHHQWL) the chain is on the cytoplasmic side. The helical; Signal-anchor for type II membrane protein transmembrane segment at 7–27 (LLAACFWVIFMFMVASKFITL) threads the bilayer. Residues 28–358 (TFKDPDGYGA…GYRVPDFLLN (331 aa)) are Lumenal-facing. Asn-101 is a glycosylation site (N-linked (GlcNAc...) asparagine). Residues 129 to 135 (PKVGNTQ) and 191 to 199 (RDPFERLIS) contribute to the 3'-phosphoadenylyl sulfate site. An N-linked (GlcNAc...) asparagine glycan is attached at Asn-318.

The protein belongs to the sulfotransferase 2 family. As to expression, predominantly expressed in hypertrophic, prehypertrophic and proliferative chondrocytes at E12 but is down-regulated in epiphyseal chondrocytes.

It is found in the golgi apparatus membrane. Catalyzes the transfer of sulfate to position 3 of terminal glucuronic acid of both protein- and lipid-linked oligosaccharides. Participates in biosynthesis of HNK-1 carbohydrate structure, a sulfated glucuronyl-lactosaminyl residue carried by many neural recognition molecules, which is involved in cell interactions during ontogenetic development and in synaptic plasticity in the adult. In Gallus gallus (Chicken), this protein is Carbohydrate sulfotransferase 10 (CHST10).